The sequence spans 595 residues: Aspartate--tRNA(Asp/Asn) ligase (595 aa).

Glu175 contacts L-aspartate. The aspartate stretch occupies residues 199 to 202 (QQYK). Arg221 and His454 together coordinate L-aspartate. 221–223 (RDE) is an ATP binding site. Position 488 (Glu488) interacts with ATP. An L-aspartate-binding site is contributed by Arg495. An ATP-binding site is contributed by 540–543 (GIDR).

It belongs to the class-II aminoacyl-tRNA synthetase family. Type 1 subfamily. In terms of assembly, homodimer.

The protein localises to the cytoplasm. The enzyme catalyses tRNA(Asx) + L-aspartate + ATP = L-aspartyl-tRNA(Asx) + AMP + diphosphate. Functionally, aspartyl-tRNA synthetase with relaxed tRNA specificity since it is able to aspartylate not only its cognate tRNA(Asp) but also tRNA(Asn). Reaction proceeds in two steps: L-aspartate is first activated by ATP to form Asp-AMP and then transferred to the acceptor end of tRNA(Asp/Asn). This is Aspartate--tRNA(Asp/Asn) ligase from Brucella abortus (strain S19).